The following is a 257-amino-acid chain: uncharacterized protein (257 aa).

NAD(+)-binding residues include aspartate 34, aspartate 60, valine 61, asparagine 87, tyrosine 152, and lysine 156. Residue tyrosine 152 is the Proton acceptor of the active site.

The protein belongs to the short-chain dehydrogenases/reductases (SDR) family.

This is an uncharacterized protein from Bacillus subtilis (strain 168).